A 144-amino-acid polypeptide reads, in one-letter code: uncharacterized protein (144 aa).

Positions 1–58 constitute an HTH lysR-type domain; it reads MDLASLNAFIAVAETGSFSEAGERLHLTQPAVSKRIAALEQQLQVRLFDRLGREVRLT. The segment at residues 18–38 is a DNA-binding region (H-T-H motif); the sequence is FSEAGERLHLTQPAVSKRIAA.

It belongs to the LysR transcriptional regulatory family.

This is an uncharacterized protein from Azotobacter vinelandii.